The primary structure comprises 248 residues: Transcription termination/antitermination protein NusG (248 aa).

The KOW domain occupies 197–227 (KGDQVRVIEGPFMNFTGTVEEVHPEKRKLTV).

This sequence belongs to the NusG family. Monomer. Homodimer.

Its function is as follows. Participates in transcription elongation, termination and antitermination. This Aquifex aeolicus (strain VF5) protein is Transcription termination/antitermination protein NusG.